The sequence spans 545 residues: Chaperonin GroEL (545 aa).

ATP contacts are provided by residues 29 to 32 (TLGP), Lys50, 86 to 90 (DGTTT), Gly415, and Asp495.

This sequence belongs to the chaperonin (HSP60) family. Forms a cylinder of 14 subunits composed of two heptameric rings stacked back-to-back. Interacts with the co-chaperonin GroES.

Its subcellular location is the cytoplasm. It catalyses the reaction ATP + H2O + a folded polypeptide = ADP + phosphate + an unfolded polypeptide.. In terms of biological role, together with its co-chaperonin GroES, plays an essential role in assisting protein folding. The GroEL-GroES system forms a nano-cage that allows encapsulation of the non-native substrate proteins and provides a physical environment optimized to promote and accelerate protein folding. The chain is Chaperonin GroEL from Porphyromonas gingivalis (strain ATCC BAA-308 / W83).